The chain runs to 496 residues: Glycerol kinase (496 aa).

Position 12 (Thr-12) interacts with ADP. ATP-binding residues include Thr-12, Thr-13, and Ser-14. Residue Thr-12 participates in sn-glycerol 3-phosphate binding. ADP is bound at residue Arg-16. Sn-glycerol 3-phosphate contacts are provided by Arg-82, Glu-83, and Tyr-134. Positions 82, 83, and 134 each coordinate glycerol. His-230 is modified (phosphohistidine; by HPr). Sn-glycerol 3-phosphate is bound at residue Asp-244. Asp-244 and Gln-245 together coordinate glycerol. ADP contacts are provided by Thr-266 and Gly-309. ATP-binding residues include Thr-266, Gly-309, Gln-313, and Gly-410. The ADP site is built by Gly-410 and Asn-414.

The protein belongs to the FGGY kinase family. Homotetramer and homodimer (in equilibrium). Post-translationally, the phosphoenolpyruvate-dependent sugar phosphotransferase system (PTS), including enzyme I, and histidine-containing protein (HPr) are required for the phosphorylation, which leads to the activation of the enzyme.

The catalysed reaction is glycerol + ATP = sn-glycerol 3-phosphate + ADP + H(+). Its pathway is polyol metabolism; glycerol degradation via glycerol kinase pathway; sn-glycerol 3-phosphate from glycerol: step 1/1. Activated by phosphorylation and inhibited by fructose 1,6-bisphosphate (FBP). Key enzyme in the regulation of glycerol uptake and metabolism. Catalyzes the phosphorylation of glycerol to yield sn-glycerol 3-phosphate. The sequence is that of Glycerol kinase from Geobacillus kaustophilus (strain HTA426).